Reading from the N-terminus, the 249-residue chain is Triosephosphate isomerase (249 aa).

2 residues coordinate substrate: Asn12 and Lys14. Residue Lys14 is modified to N6-acetyllysine. Asn16 is modified (deamidated asparagine). A 3'-nitrotyrosine modification is found at Tyr68. Asn72 carries the deamidated asparagine modification. At Ser80 the chain carries Phosphoserine. The active-site Electrophile is His96. Phosphoserine is present on Ser106. Lys142 is covalently cross-linked (Glycyl lysine isopeptide (Lys-Gly) (interchain with G-Cter in SUMO1)). Lys149 bears the N6-succinyllysine mark. An N6-acetyllysine; alternate modification is found at Lys156. The residue at position 156 (Lys156) is an N6-succinyllysine; alternate. Ser159 bears the Phosphoserine mark. Glu166 (proton acceptor) is an active-site residue. Thr173 is subject to Phosphothreonine. The residue at position 194 (Lys194) is an N6-acetyllysine; alternate. At Lys194 the chain carries N6-succinyllysine; alternate. Lys194 carries the post-translational modification N6-methyllysine; alternate. Ser198 carries the phosphoserine modification. A 3'-nitrotyrosine modification is found at Tyr209. Ser212 bears the Phosphoserine mark. At Thr214 the chain carries Phosphothreonine. Ser223 is modified (phosphoserine). Lys238 is subject to N6-acetyllysine.

It belongs to the triosephosphate isomerase family. As to quaternary structure, homodimer. In terms of processing, asn-16 and Asn-72 undergo deamidation which gives rise to four extra negative charges. These are expected to decrease subunit-subunit interactions and so expose the hydrophobic interface to the aqueous environment.

It localises to the cytoplasm. The catalysed reaction is D-glyceraldehyde 3-phosphate = dihydroxyacetone phosphate. The enzyme catalyses dihydroxyacetone phosphate = methylglyoxal + phosphate. The protein operates within carbohydrate degradation; glycolysis; D-glyceraldehyde 3-phosphate from glycerone phosphate: step 1/1. It participates in carbohydrate biosynthesis; gluconeogenesis. In terms of biological role, triosephosphate isomerase is an extremely efficient metabolic enzyme that catalyzes the interconversion between dihydroxyacetone phosphate (DHAP) and D-glyceraldehyde-3-phosphate (G3P) in glycolysis and gluconeogenesis. Its function is as follows. It is also responsible for the non-negligible production of methylglyoxal a reactive cytotoxic side-product that modifies and can alter proteins, DNA and lipids. In Oryctolagus cuniculus (Rabbit), this protein is Triosephosphate isomerase (TPI1).